The sequence spans 997 residues: DNA polymerase I (997 aa).

In terms of domain architecture, 5'-3' exonuclease spans 174 to 261; it reads VMPTQLLDLF…VPCVFSLEDS (88 aa). In terms of domain architecture, 3'-5' exonuclease spans 428–589; it reads VPDVSLHTES…LYHYLKLRLE (162 aa).

It belongs to the DNA polymerase type-A family.

It carries out the reaction DNA(n) + a 2'-deoxyribonucleoside 5'-triphosphate = DNA(n+1) + diphosphate. Its function is as follows. In addition to polymerase activity, this DNA polymerase exhibits 3'-5' and 5'-3' exonuclease activity. The sequence is that of DNA polymerase I (polA) from Treponema pallidum (strain Nichols).